The following is a 512-amino-acid chain: Alpha-1B-glycoprotein (512 aa).

Residues methionine 1–glycine 18 form the signal peptide. 5 Ig-like V-type domains span residues methionine 22 to lysine 126, glutamate 127 to serine 219, glutamine 220 to leucine 312, methionine 313 to asparagine 415, and glycine 416 to glycine 512. Residues asparagine 44, asparagine 89, and asparagine 192 are each glycosylated (N-linked (GlcNAc...) asparagine). 5 disulfide bridges follow: cysteine 49/cysteine 96, cysteine 153/cysteine 195, cysteine 245/cysteine 292, cysteine 343/cysteine 392, and cysteine 441/cysteine 488. 4 N-linked (GlcNAc...) asparagine glycosylation sites follow: asparagine 369, asparagine 381, asparagine 389, and asparagine 485.

As to quaternary structure, interacts with CRISP3. As to expression, expressed in the liver hepatocytes of male and female GH transgenic mice and in the liver of female, but not of male, non-transgenic mice.

It localises to the secreted. The protein is Alpha-1B-glycoprotein (A1bg) of Mus musculus (Mouse).